A 609-amino-acid chain; its full sequence is MIQTASTISSNGGTNQGMESSSANSPEMNGTQNSMSVGMSGSGSSQNRKITQFSNKLYNMVNDSSTDSLIRWSDRGDSFLVIGHEDFAKLVLPRYFKHNNFSSFVRQLNMYGFHKVPHIQQGVLQSDSPNELLEFANPNFQRDQPELLCLVTRKKAGSQPVEESNTSLDMSTISSELQNIRIQQMNLSNELSRIQVDNAALWQENMENRERQRRHQETIDKILRFLASVYLDGKQKPPSKVMPKSRRLLLEAKYPTVSPTNEPSAHSRPSPQGTTANSSSASISSLHNTTPDGEGKYRSVQNGRALNYVSSFNSDSHSPKDYISQSYTNEPGLKKESADSFNNSIDSYISPNQSPNTDVPSLNRDDTTDPKVVNTGDIINMLDDANSIEGSNMNSLSPLLFDYPNSLYPVNNTSSEQHHNSYRGSVSNSQPSGNLSESTNLQPVQPVDYMSNSNPSYGSYNAEDQLTNFHPGYAMDQKRISKLSDGITKQDQNIQALADILGIPLGDGKIDDAGFSANSPTNLNLPVSSDLDSVLNIPPNEDVFPDSNPVFDEFTNISNLTSPIEASNGNTFGSNPVSLPNQQKSVNPSLMTVSSPRQVRKKRKSSIGA.

Over residues 1–33 (MIQTASTISSNGGTNQGMESSSANSPEMNGTQN) the composition is skewed to polar residues. A disordered region spans residues 1–47 (MIQTASTISSNGGTNQGMESSSANSPEMNGTQNSMSVGMSGSGSSQN). Positions 34–45 (SMSVGMSGSGSS) are enriched in low complexity. Residues 50–156 (ITQFSNKLYN…LLCLVTRKKA (107 aa)) mediate DNA binding. Disordered regions lie at residues 255–298 (PTVS…GKYR), 310–371 (SSFN…TDPK), 411–445 (NNTSSEQHHNSYRGSVSNSQPSGNLSESTNLQPVQ), and 567–609 (SNGN…SIGA). Composition is skewed to polar residues over residues 257–277 (VSPTNEPSAHSRPSPQGTTAN), 339–360 (DSFNNSIDSYISPNQSPNTDVP), 422–443 (YRGSVSNSQPSGNLSESTNLQP), and 567–597 (SNGNTFGSNPVSLPNQQKSVNPSLMTVSSPR). A Phosphoserine modification is found at Ser-350. Residues 598–609 (QVRKKRKSSIGA) are compositionally biased toward basic residues.

The protein belongs to the HSF family. Homotrimer.

It localises to the nucleus. Functionally, DNA-binding protein that specifically binds heat shock promoter elements (HSE) and activates transcription. Also required for growth at normal temperatures. This Schizosaccharomyces pombe (strain 972 / ATCC 24843) (Fission yeast) protein is Heat shock factor protein (hsf1).